Consider the following 497-residue polypeptide: Glycerol kinase (497 aa).

Residue threonine 12 participates in ADP binding. The ATP site is built by threonine 12, threonine 13, and serine 14. Threonine 12 provides a ligand contact to sn-glycerol 3-phosphate. Position 16 (arginine 16) interacts with ADP. Sn-glycerol 3-phosphate-binding residues include arginine 82, glutamate 83, tyrosine 133, and aspartate 243. Residues arginine 82, glutamate 83, tyrosine 133, aspartate 243, and glutamine 244 each contribute to the glycerol site. The ADP site is built by threonine 265 and glycine 308. Residues threonine 265, glycine 308, glutamine 312, and glycine 409 each contribute to the ATP site. An ADP-binding site is contributed by glycine 409.

Belongs to the FGGY kinase family.

The enzyme catalyses glycerol + ATP = sn-glycerol 3-phosphate + ADP + H(+). The protein operates within polyol metabolism; glycerol degradation via glycerol kinase pathway; sn-glycerol 3-phosphate from glycerol: step 1/1. Its activity is regulated as follows. Inhibited by fructose 1,6-bisphosphate (FBP). In terms of biological role, key enzyme in the regulation of glycerol uptake and metabolism. Catalyzes the phosphorylation of glycerol to yield sn-glycerol 3-phosphate. This chain is Glycerol kinase, found in Dichelobacter nodosus (strain VCS1703A).